A 522-amino-acid polypeptide reads, in one-letter code: Flavin-dependent halogenase armH1 (522 aa).

Residues Gly-16, Ala-19, and Glu-49 each coordinate FAD. 2 residues coordinate chloride: Ser-328 and Gly-329. FAD is bound at residue Ile-330.

The protein belongs to the flavin-dependent halogenase family.

It catalyses the reaction melleolide F + FADH2 + chloride + O2 = 6'-chloromelleolide F + FAD + 2 H2O + H(+). Flavin-dependent halogenase involved in the biosynthesis of melleolides, a range of antifungal and phytotoxic polyketide derivatives composed of an orsellinic acid (OA) moiety esterified to various sesquiterpene alcohols. The halogenase catalyzes the transfer of a single chlorine atom to the melleolide backbone, resulting in a 6'-chloromelleolide product. The enzyme acts on free substrate and does not depend on carrier-protein-dependent acceptor molecules. The chain is Flavin-dependent halogenase armH1 from Armillaria mellea (Honey mushroom).